A 66-amino-acid polypeptide reads, in one-letter code: Muscarinic toxin 1 (66 aa).

Disulfide bonds link C3/C24, C17/C42, C46/C58, and C59/C64.

It belongs to the three-finger toxin family. Short-chain subfamily. Aminergic toxin sub-subfamily. In terms of tissue distribution, expressed by the venom gland.

The protein resides in the secreted. Functionally, shows a non-competitive interaction with adrenergic and muscarinic receptors. Binds to alpha-2b (ADRA2B) (IC(50)=2.3 nM), alpha-1a (ADRA1A), alpha-1b (ADRA1B), and alpha-2c (ADRA2C) adrenergic receptors. Reversibly binds to M1 (CHRM1) muscarinic acetylcholine receptors, probably by interacting with the orthosteric site. Also reveals a slightly weaker effect at M3 (CHRM3) and M4 (CHRM4) receptors. The order of potency is ADRA2B&gt;&gt;CHRM1&gt;ADRA1A&gt;ADRA1B&gt;ADRA2C/CHRM4. In Dendroaspis angusticeps (Eastern green mamba), this protein is Muscarinic toxin 1.